Reading from the N-terminus, the 180-residue chain is Cytochrome b6-f complex iron-sulfur subunit 2 (180 aa).

A helical transmembrane segment spans residues 21 to 43 (LLTFGTITGVAAGALYPAVKYLI). The Rieske domain occupies 66 to 162 (VTEFLASHNA…ATVTDDDKLV (97 aa)). The [2Fe-2S] cluster site is built by Cys-108, His-110, Cys-126, and His-129. Cys-113 and Cys-128 are disulfide-bonded.

It belongs to the Rieske iron-sulfur protein family. As to quaternary structure, the 4 large subunits of the cytochrome b6-f complex are cytochrome b6, subunit IV (17 kDa polypeptide, PetD), cytochrome f and the Rieske protein, while the 4 small subunits are PetG, PetL, PetM and PetN. The complex functions as a dimer. [2Fe-2S] cluster is required as a cofactor.

It is found in the cellular thylakoid membrane. It carries out the reaction 2 oxidized [plastocyanin] + a plastoquinol + 2 H(+)(in) = 2 reduced [plastocyanin] + a plastoquinone + 4 H(+)(out). Component of the cytochrome b6-f complex, which mediates electron transfer between photosystem II (PSII) and photosystem I (PSI), cyclic electron flow around PSI, and state transitions. The protein is Cytochrome b6-f complex iron-sulfur subunit 2 of Synechocystis sp. (strain ATCC 27184 / PCC 6803 / Kazusa).